We begin with the raw amino-acid sequence, 166 residues long: PTS system glucose-specific EIIA component (166 aa).

The region spanning 36 to 140 (DVVFSEKIVG…SVLTPIVISN (105 aa)) is the PTS EIIA type-1 domain. 2 residues coordinate Zn(2+): His73 and His88. Residue His88 is the Tele-phosphohistidine intermediate; for EIIA activity of the active site. At His88 the chain carries Phosphohistidine; by HPr.

Heterodimer with glycerol kinase (glpk). Zn(2+) serves as cofactor.

The protein localises to the cytoplasm. The phosphoenolpyruvate-dependent sugar phosphotransferase system (sugar PTS), a major carbohydrate active transport system, catalyzes the phosphorylation of incoming sugar substrates concomitantly with their translocation across the cell membrane. The enzyme II complex composed of PtsG and Crr is involved in glucose transport. The protein is PTS system glucose-specific EIIA component (crr) of Haemophilus influenzae (strain ATCC 51907 / DSM 11121 / KW20 / Rd).